We begin with the raw amino-acid sequence, 217 residues long: Aminopyrimidine aminohydrolase (217 aa).

Asp44 contacts substrate. Cys135 serves as the catalytic Nucleophile. The substrate site is built by Tyr139 and Tyr165. Glu207 acts as the Proton donor in catalysis.

The protein belongs to the TenA family. In terms of assembly, homotetramer.

The catalysed reaction is 4-amino-5-aminomethyl-2-methylpyrimidine + H2O = 4-amino-5-hydroxymethyl-2-methylpyrimidine + NH4(+). It participates in cofactor biosynthesis; thiamine diphosphate biosynthesis. In terms of biological role, catalyzes an amino-pyrimidine hydrolysis reaction at the C5' of the pyrimidine moiety of thiamine compounds to give a hydroxymethylpyrimidine (HMP). Displays low activity on 4-amino-5-aminomethyl-2-methylpyrimidine as substrate, indicating that the enzyme may act on a different HMP precursor that may derive from the human stomach food assumption or processing. Is probably involved in thiamine biosynthesis. Does not display thiaminase II activity, as it is unable to hydrolyze thiamine. The chain is Aminopyrimidine aminohydrolase from Helicobacter pylori (Campylobacter pylori).